Reading from the N-terminus, the 3101-residue chain is Probable polyketide synthase 32 (3101 aa).

One can recognise a Ketosynthase family 3 (KS3) domain in the interval 27-465 (SGDVAVIGIG…GSNVCLILSE (439 aa)). Residues Cys199, His338, and His388 each act as for beta-ketoacyl synthase activity in the active site. The acyl/malonyl transferase stretch occupies residues 664–697 (GVSADIIIGHSLGEVSSAYCSGMIDFETLCYLTY). Ser674 serves as the catalytic For acyl/malonyl transferase activity. The interval 965–1087 (GPSINNLGNN…GNFSLTKHNS (123 aa)) is N-terminal hotdog fold. A PKS/mFAS DH domain is found at 965-1287 (GPSINNLGNN…CTLVSLPNPE (323 aa)). Catalysis depends on His999, which acts as the Proton acceptor; for dehydratase activity. The tract at residues 1104–1287 (NFTSISKQDL…CTLVSLPNPE (184 aa)) is C-terminal hotdog fold. Catalysis depends on Asp1176, which acts as the Proton donor; for dehydratase activity. A disordered region spans residues 1209 to 1236 (KNGNNNDDDEESNNNNNNNNNNNNNNNN). Residues 1221-1236 (NNNNNNNNNNNNNNNN) show a composition bias toward low complexity. The 78-residue stretch at 2550 to 2627 (DNNEIIRSTI…QSIEIIKSAN (78 aa)) folds into the Carrier domain. At Ser2587 the chain carries O-(pantetheine 4'-phosphoryl)serine. Positions 2627–2648 (NNKNNKNNNNNNNNKTNKNNNN) are disordered.

The cofactor is pantetheine 4'-phosphate.

In terms of biological role, probable polyketide synthase. The sequence is that of Probable polyketide synthase 32 (pks32) from Dictyostelium discoideum (Social amoeba).